We begin with the raw amino-acid sequence, 488 residues long: 1-deoxy-D-xylulose 5-phosphate reductoisomerase, apicoplastic (488 aa).

An apicoplast-targeting transit peptide spans M1–G72. NADP(+) contacts are provided by residues T86–I89 and N115–S117. A 1-deoxy-D-xylulose 5-phosphate-binding site is contributed by K205. Position 206 (E206) interacts with NADP(+). D231 lines the Mn(2+) pocket. 4 residues coordinate 1-deoxy-D-xylulose 5-phosphate: S232, E233, S270, and H293. E233 is a Mn(2+) binding site. NADP(+) is bound at residue G299. S306, N311, K312, and E315 together coordinate 1-deoxy-D-xylulose 5-phosphate. E315 is a binding site for Mn(2+).

Belongs to the DXR family. As to quaternary structure, homodimer. The cofactor is Mg(2+). It depends on Mn(2+) as a cofactor.

It is found in the plastid. The protein localises to the apicoplast. It catalyses the reaction 2-C-methyl-D-erythritol 4-phosphate + NADP(+) = 1-deoxy-D-xylulose 5-phosphate + NADPH + H(+). The protein operates within isoprenoid biosynthesis; isopentenyl diphosphate biosynthesis via DXP pathway; isopentenyl diphosphate from 1-deoxy-D-xylulose 5-phosphate: step 1/6. With respect to regulation, inhibited by fosmidomycin and its derivatives. Catalyzes the NADPH-dependent rearrangement and reduction of 1-deoxy-D-xylulose-5-phosphate (DXP) to 2-C-methyl-D-erythritol 4-phosphate (MEP). The sequence is that of 1-deoxy-D-xylulose 5-phosphate reductoisomerase, apicoplastic (DXR) from Plasmodium falciparum (isolate 3D7).